The primary structure comprises 101 residues: Urease subunit beta (101 aa).

The protein belongs to the urease beta subunit family. Heterotrimer of UreA (gamma), UreB (beta) and UreC (alpha) subunits. Three heterotrimers associate to form the active enzyme.

The protein resides in the cytoplasm. It carries out the reaction urea + 2 H2O + H(+) = hydrogencarbonate + 2 NH4(+). It functions in the pathway nitrogen metabolism; urea degradation; CO(2) and NH(3) from urea (urease route): step 1/1. The chain is Urease subunit beta from Bradyrhizobium sp. (strain BTAi1 / ATCC BAA-1182).